The following is a 422-amino-acid chain: Metallocarboxypeptidase A (422 aa).

An N-terminal signal peptide occupies residues 1 to 17 (MRSVLSFALLAANVVSA). A propeptide spans 18 to 112 (AVLAPFDYSG…FEAYSAGYAP (95 aa)) (activation peptide). A Peptidase M14 domain is found at 119 to 419 (SYHSYQDHLS…AGTVAMLKAV (301 aa)). Zn(2+) is bound by residues His-179 and Glu-182. Substrate-binding positions include 179–182 (HARE), Arg-237, and 254–255 (NR). Cys-248 and Cys-271 are disulfide-bonded. Residue His-309 coordinates Zn(2+). Position 310 to 311 (310 to 311 (SY)) interacts with substrate. Glu-385 serves as the catalytic Proton donor/acceptor.

The protein belongs to the peptidase M14 family. It depends on Zn(2+) as a cofactor.

It is found in the secreted. Functionally, extracellular metalloprotease that contributes to pathogenicity. The sequence is that of Metallocarboxypeptidase A (MCPA) from Arthroderma otae (strain ATCC MYA-4605 / CBS 113480) (Microsporum canis).